The sequence spans 354 residues: Ornithine carbamoyltransferase, catabolic (354 aa).

Residues 67 to 70 (STRT), Gln-94, Arg-118, and 145 to 148 (HPTQ) each bind carbamoyl phosphate. L-ornithine contacts are provided by residues Asn-177, Asp-241, and 245–246 (SM). Residues 284-285 (CL) and Arg-329 contribute to the carbamoyl phosphate site.

This sequence belongs to the aspartate/ornithine carbamoyltransferase superfamily. OTCase family.

The protein resides in the cytoplasm. It carries out the reaction carbamoyl phosphate + L-ornithine = L-citrulline + phosphate + H(+). It participates in amino-acid degradation; L-arginine degradation via ADI pathway; carbamoyl phosphate from L-arginine: step 2/2. Functionally, reversibly catalyzes the transfer of the carbamoyl group from carbamoyl phosphate (CP) to the N(epsilon) atom of ornithine (ORN) to produce L-citrulline. In Lactococcus lactis subsp. cremoris (strain MG1363), this protein is Ornithine carbamoyltransferase, catabolic (arcB).